A 134-amino-acid polypeptide reads, in one-letter code: Small ribosomal subunit protein uS8c (134 aa).

This sequence belongs to the universal ribosomal protein uS8 family. In terms of assembly, part of the 30S ribosomal subunit.

Its subcellular location is the plastid. It is found in the chloroplast. One of the primary rRNA binding proteins, it binds directly to 16S rRNA central domain where it helps coordinate assembly of the platform of the 30S subunit. In Daucus carota (Wild carrot), this protein is Small ribosomal subunit protein uS8c (rps8).